The following is a 437-amino-acid chain: Protein arginine methyltransferase NDUFAF7 homolog, mitochondrial (437 aa).

The tract at residues 21–49 (RPNLGATGTPKMEPPKEQPEASSKAESGH) is disordered.

Belongs to the NDUFAF7 family.

It is found in the mitochondrion. The enzyme catalyses L-arginyl-[protein] + 2 S-adenosyl-L-methionine = N(omega),N(omega)'-dimethyl-L-arginyl-[protein] + 2 S-adenosyl-L-homocysteine + 2 H(+). Functionally, arginine methyltransferase involved in the assembly or stability of mitochondrial NADH:ubiquinone oxidoreductase complex (complex I). The protein is Protein arginine methyltransferase NDUFAF7 homolog, mitochondrial of Drosophila melanogaster (Fruit fly).